Here is an 876-residue protein sequence, read N- to C-terminus: Valine--tRNA ligase (876 aa).

Positions 44-54 match the 'HIGH' region motif; the sequence is PNVTGKLHLGH. The 'KMSKS' region signature appears at 520-524; the sequence is KMSKS. ATP is bound at residue lysine 523. Positions 805 to 876 form a coiled coil; it reads LEGLIDMDKE…VKARIEQLKA (72 aa).

Belongs to the class-I aminoacyl-tRNA synthetase family. ValS type 1 subfamily. In terms of assembly, monomer.

It localises to the cytoplasm. It carries out the reaction tRNA(Val) + L-valine + ATP = L-valyl-tRNA(Val) + AMP + diphosphate. Functionally, catalyzes the attachment of valine to tRNA(Val). As ValRS can inadvertently accommodate and process structurally similar amino acids such as threonine, to avoid such errors, it has a 'posttransfer' editing activity that hydrolyzes mischarged Thr-tRNA(Val) in a tRNA-dependent manner. The protein is Valine--tRNA ligase of Staphylococcus aureus (strain MRSA252).